Consider the following 362-residue polypeptide: Peptide chain release factor 1 (362 aa).

At Q240 the chain carries N5-methylglutamine.

Belongs to the prokaryotic/mitochondrial release factor family. In terms of processing, methylated by PrmC. Methylation increases the termination efficiency of RF1.

It is found in the cytoplasm. Its function is as follows. Peptide chain release factor 1 directs the termination of translation in response to the peptide chain termination codons UAG and UAA. This Bifidobacterium longum subsp. infantis (strain ATCC 15697 / DSM 20088 / JCM 1222 / NCTC 11817 / S12) protein is Peptide chain release factor 1.